A 358-amino-acid polypeptide reads, in one-letter code: Neuronal-specific septin-3 (358 aa).

Positions 1–10 are enriched in basic and acidic residues; that stretch reads MSKGLPEART. A disordered region spans residues 1 to 29; that stretch reads MSKGLPEARTDTAMSELVPEPRPKPAVPM. One can recognise a Septin-type G domain in the interval 58-331; the sequence is TGFDFNIMVV…ETYRAKRLND (274 aa). Residues 68 to 75 are G1 motif; that stretch reads GQSGLGKS. A GTP-binding site is contributed by 68–75; the sequence is GQSGLGKS. Ser91 is modified (phosphoserine). Thr102 serves as a coordination point for GTP. Positions 125–128 are G3 motif; the sequence is DTPG. A G4 motif region spans residues 207–210; sequence AKAD. Residues 208-216, Gly265, and Arg280 contribute to the GTP site; that span reads KADTMTLEE.

Belongs to the TRAFAC class TrmE-Era-EngA-EngB-Septin-like GTPase superfamily. Septin GTPase family. As to quaternary structure, septins polymerize into heterooligomeric protein complexes that form filaments, and can associate with cellular membranes, actin filaments and microtubules. GTPase activity is required for filament formation. Post-translationally, phosphorylated by PKG on serine residues. Phosphorylated by PKG on Ser-91. In terms of tissue distribution, brain-specific, with highest expression in the hippocampal CA3 region (at protein level).

The protein resides in the cytoplasm. Its subcellular location is the cytoskeleton. It is found in the synapse. Functionally, filament-forming cytoskeletal GTPase. May play a role in cytokinesis (Potential). This is Neuronal-specific septin-3 from Rattus norvegicus (Rat).